Consider the following 175-residue polypeptide: NADH-ubiquinone oxidoreductase chain 6 (175 aa).

Transmembrane regions (helical) follow at residues Met1–Ser21, Ser25–Leu45, Phe47–Val67, Ala88–Leu108, and Tyr149–Met169.

Belongs to the complex I subunit 6 family. As to quaternary structure, core subunit of respiratory chain NADH dehydrogenase (Complex I) which is composed of 45 different subunits.

It localises to the mitochondrion inner membrane. It catalyses the reaction a ubiquinone + NADH + 5 H(+)(in) = a ubiquinol + NAD(+) + 4 H(+)(out). Its function is as follows. Core subunit of the mitochondrial membrane respiratory chain NADH dehydrogenase (Complex I) which catalyzes electron transfer from NADH through the respiratory chain, using ubiquinone as an electron acceptor. Essential for the catalytic activity and assembly of complex I. The sequence is that of NADH-ubiquinone oxidoreductase chain 6 (MT-ND6) from Phoca vitulina (Harbor seal).